The sequence spans 363 residues: Isopentenyl-diphosphate delta-isomerase (363 aa).

6 to 7 (RK) is a binding site for substrate. Residues 64–66 (AMT), S94, and N123 contribute to the FMN site. Q153 provides a ligand contact to substrate. Residue E154 participates in Mg(2+) binding. Residues K185, S210, T215, 259 to 261 (GVR), and 280 to 281 (SA) contribute to the FMN site.

Belongs to the IPP isomerase type 2 family. In terms of assembly, homooctamer. Dimer of tetramers. It depends on Mg(2+) as a cofactor. The cofactor is FMN. NADPH is required as a cofactor.

It localises to the cytoplasm. It carries out the reaction isopentenyl diphosphate = dimethylallyl diphosphate. Functionally, involved in the biosynthesis of isoprenoids. Catalyzes the 1,3-allylic rearrangement of the homoallylic substrate isopentenyl (IPP) to its allylic isomer, dimethylallyl diphosphate (DMAPP). The sequence is that of Isopentenyl-diphosphate delta-isomerase from Streptomyces sp. (strain CL190).